We begin with the raw amino-acid sequence, 353 residues long: Alanine racemase (353 aa).

Residue Lys34 is the Proton acceptor; specific for D-alanine of the active site. Lys34 carries the N6-(pyridoxal phosphate)lysine modification. Substrate is bound at residue Arg128. The Proton acceptor; specific for L-alanine role is filled by Tyr251. Residue Met299 coordinates substrate.

It belongs to the alanine racemase family. Pyridoxal 5'-phosphate is required as a cofactor.

The catalysed reaction is L-alanine = D-alanine. Its pathway is amino-acid biosynthesis; D-alanine biosynthesis; D-alanine from L-alanine: step 1/1. Functionally, catalyzes the interconversion of L-alanine and D-alanine. May also act on other amino acids. The protein is Alanine racemase (alr) of Alcanivorax borkumensis (strain ATCC 700651 / DSM 11573 / NCIMB 13689 / SK2).